The primary structure comprises 553 residues: Coiled-coil domain-containing protein 22 homolog (553 aa).

The tract at residues 236 to 264 (DSEEPAPPPISTVKPDASAEEEASPIQEL) is disordered. Coiled-coil stretches lie at residues 261–286 (IQELSDQVEELRVQCETLLAERKAHA), 314–407 (ERTS…QSLA), and 498–549 (NVTK…VEQP).

This sequence belongs to the CCDC22 family.

This chain is Coiled-coil domain-containing protein 22 homolog, found in Drosophila erecta (Fruit fly).